The primary structure comprises 728 residues: Procollagen-lysine,2-oxoglutarate 5-dioxygenase 1 (728 aa).

The signal sequence occupies residues 1 to 18 (MRSLLLLAPLAWLLLVQA). 2 N-linked (GlcNAc...) asparagine glycosylation sites follow: N198 and N539. The 92-residue stretch at 637–728 (QFDLAFVVRY…RYIAVSFVDP (92 aa)) folds into the Fe2OG dioxygenase domain. The Fe cation site is built by H657 and D659. The N-linked (GlcNAc...) asparagine glycan is linked to N687. H709 serves as a coordination point for Fe cation. Residue R719 is part of the active site.

Homodimer. Identified in a complex with P3H3 and P3H4. The cofactor is Fe(2+). L-ascorbate serves as cofactor. As to expression, highly expressed in the liver, heart, lung, skeletal muscle and kidney.

It localises to the rough endoplasmic reticulum membrane. It carries out the reaction L-lysyl-[collagen] + 2-oxoglutarate + O2 = (5R)-5-hydroxy-L-lysyl-[collagen] + succinate + CO2. Functionally, part of a complex composed of PLOD1, P3H3 and P3H4 that catalyzes hydroxylation of lysine residues in collagen alpha chains and is required for normal assembly and cross-linkling of collagen fibrils. Forms hydroxylysine residues in -Xaa-Lys-Gly- sequences in collagens. These hydroxylysines serve as sites of attachment for carbohydrate units and are essential for the stability of the intermolecular collagen cross-links. This chain is Procollagen-lysine,2-oxoglutarate 5-dioxygenase 1 (Plod1), found in Mus musculus (Mouse).